A 475-amino-acid chain; its full sequence is Ribulose bisphosphate carboxylase large chain (475 aa).

A propeptide spanning residues 1-2 is cleaved from the precursor; sequence MS. At proline 3 the chain carries N-acetylproline. At lysine 14 the chain carries N6,N6,N6-trimethyllysine. 2 residues coordinate substrate: asparagine 123 and threonine 173. Lysine 175 functions as the Proton acceptor in the catalytic mechanism. Lysine 177 serves as a coordination point for substrate. Positions 201, 203, and 204 each coordinate Mg(2+). The residue at position 201 (lysine 201) is an N6-carboxylysine. Residue histidine 294 is the Proton acceptor of the active site. The substrate site is built by arginine 295, histidine 327, and serine 379.

It belongs to the RuBisCO large chain family. Type I subfamily. As to quaternary structure, heterohexadecamer of 8 large chains and 8 small chains; disulfide-linked. The disulfide link is formed within the large subunit homodimers. It depends on Mg(2+) as a cofactor. In terms of processing, the disulfide bond which can form in the large chain dimeric partners within the hexadecamer appears to be associated with oxidative stress and protein turnover.

The protein resides in the plastid. The protein localises to the chloroplast. It carries out the reaction 2 (2R)-3-phosphoglycerate + 2 H(+) = D-ribulose 1,5-bisphosphate + CO2 + H2O. It catalyses the reaction D-ribulose 1,5-bisphosphate + O2 = 2-phosphoglycolate + (2R)-3-phosphoglycerate + 2 H(+). RuBisCO catalyzes two reactions: the carboxylation of D-ribulose 1,5-bisphosphate, the primary event in carbon dioxide fixation, as well as the oxidative fragmentation of the pentose substrate in the photorespiration process. Both reactions occur simultaneously and in competition at the same active site. This Cedrus deodara (Deodar cedar) protein is Ribulose bisphosphate carboxylase large chain.